We begin with the raw amino-acid sequence, 125 residues long: Small ribosomal subunit protein eS8 (125 aa).

Belongs to the eukaryotic ribosomal protein eS8 family. As to quaternary structure, part of the 30S ribosomal subunit.

This Methanosarcina mazei (strain ATCC BAA-159 / DSM 3647 / Goe1 / Go1 / JCM 11833 / OCM 88) (Methanosarcina frisia) protein is Small ribosomal subunit protein eS8.